We begin with the raw amino-acid sequence, 114 residues long: MSALSLLILGLLTAVPPASCQQGLGNLQPWMQGLIAVAVFLVLVAIAFAVNHFWCQEEPEPAHMILTVGNKADGVLVGTDGRYSSMAASFRSSEHENAYENVPEEEGKVRSTPM.

Over Met-1–Gln-28 the chain is Extracellular. The chain crosses the membrane as a helical span at residues Pro-29–Asn-51. The Cytoplasmic segment spans residues His-52 to Met-114. Position 85 is a phosphoserine (Ser-85). The disordered stretch occupies residues Glu-94 to Met-114. The segment covering Glu-105 to Met-114 has biased composition (basic and acidic residues).

Belongs to the PDZK1-interacting protein 1/SMIM24 family. Forms a heterodimer (via N-terminal transmembrane helix) with SLC5A2/SGLT2 (via TM13); this interaction enhances SLC5A2 transporter activity. Interacts with PDZK1.

Its subcellular location is the apical cell membrane. Auxiliary protein of electrogenic Na(+)-coupled sugar symporter SLC5A2/SGLT2 and SLC5A1/SGLT1. Essential for the transporter activity of SLC5A2/SGLT2 but not SLC5A1/SGLT1. The chain is PDZK1-interacting protein 1 from Homo sapiens (Human).